A 485-amino-acid polypeptide reads, in one-letter code: Inosine-5'-monophosphate dehydrogenase (485 aa).

CBS domains follow at residues 99–154 and 156–212; these read IVED…TVKE and MTRE…KNAV. Residues D247 and 294–296 contribute to the NAD(+) site; that span reads GIG. The K(+) site is built by G296 and G298. S299 provides a ligand contact to IMP. A K(+)-binding site is contributed by C301. C301 acts as the Thioimidate intermediate in catalysis. Residues 334–336, 357–358, and 381–385 contribute to the IMP site; these read DGG, GN, and YRGMG. Residue R397 is the Proton acceptor of the active site. An IMP-binding site is contributed by E412. The K(+) site is built by E466, S467, and H468.

This sequence belongs to the IMPDH/GMPR family. As to quaternary structure, homotetramer. It depends on K(+) as a cofactor.

It catalyses the reaction IMP + NAD(+) + H2O = XMP + NADH + H(+). Its pathway is purine metabolism; XMP biosynthesis via de novo pathway; XMP from IMP: step 1/1. Its activity is regulated as follows. Mycophenolic acid (MPA) is a non-competitive inhibitor that prevents formation of the closed enzyme conformation by binding to the same site as the amobile flap. In contrast, mizoribine monophosphate (MZP) is a competitive inhibitor that induces the closed conformation. MPA is a potent inhibitor of mammalian IMPDHs but a poor inhibitor of the bacterial enzymes. MZP is a more potent inhibitor of bacterial IMPDH. In terms of biological role, catalyzes the conversion of inosine 5'-phosphate (IMP) to xanthosine 5'-phosphate (XMP), the first committed and rate-limiting step in the de novo synthesis of guanine nucleotides, and therefore plays an important role in the regulation of cell growth. This chain is Inosine-5'-monophosphate dehydrogenase, found in Pyrococcus furiosus (strain ATCC 43587 / DSM 3638 / JCM 8422 / Vc1).